The sequence spans 179 residues: Transcription factor 21 (179 aa).

The tract at residues 20–86 is disordered; it reads CDGIKLDPNK…KQVQRNAANA (67 aa). Residues 34–46 are compositionally biased toward polar residues; that stretch reads SNDSNEESSTCDN. A compositionally biased stretch (basic residues) spans 50 to 64; it reads KKGRGTSGKRRKASS. Residues 70-80 are compositionally biased toward polar residues; the sequence is GTINQEGKQVQ. A bHLH domain is found at 79–131; the sequence is VQRNAANARERARMRVLSKAFSRLKTTLPWVPPDTKLSKLDTLRLASSYIAHL.

In terms of assembly, efficient DNA binding requires dimerization with another bHLH protein. As to expression, at the start of neurulation (stage 13), expressed in the pronephros. At tailbud stage (stage 25-28), expression is high in the anterior-most branchial arch and pronephric glomus. At stage 40, staining persists in the glomus and in the epicardium region of the heart, and at stage 42, expression is higher in the glomus than in the kidney tubule or duct. In adults, expression is highest in the rectum and the spleen, with significant expression in the duodenum, heart, kidney, lungs, pancreas, skin, liver and muscle.

The protein resides in the nucleus. Involved in epithelial-mesenchymal interactions in kidney and lung morphogenesis that include epithelial differentiation and branching morphogenesis. The polypeptide is Transcription factor 21 (tcf21) (Xenopus laevis (African clawed frog)).